A 148-amino-acid polypeptide reads, in one-letter code: MEKTFLMVKPDGVQRAFIGEIVARFEKKGFQLVGAKLMQVTPEIAGQHYAEHKEKPFFGELVDFITSGPVFAMVWQGEGVVDTARNMMGKTRPHEAAPGTIRGDFGVTVAKNIIHGSDSLESAEREIAIFFKEEELVDYSKLMNEWIY.

Residues Lys9, Phe57, Arg85, Thr91, Arg102, and Asn112 each contribute to the ATP site. Thr91 is subject to Phosphothreonine. The active-site Pros-phosphohistidine intermediate is His115. Phosphoserine is present on Ser122.

It belongs to the NDK family. Homotetramer. The cofactor is Mg(2+).

Its subcellular location is the cytoplasm. It carries out the reaction a 2'-deoxyribonucleoside 5'-diphosphate + ATP = a 2'-deoxyribonucleoside 5'-triphosphate + ADP. The catalysed reaction is a ribonucleoside 5'-diphosphate + ATP = a ribonucleoside 5'-triphosphate + ADP. Major role in the synthesis of nucleoside triphosphates other than ATP. The ATP gamma phosphate is transferred to the NDP beta phosphate via a ping-pong mechanism, using a phosphorylated active-site intermediate. The protein is Nucleoside diphosphate kinase of Bacillus cereus (strain ATCC 14579 / DSM 31 / CCUG 7414 / JCM 2152 / NBRC 15305 / NCIMB 9373 / NCTC 2599 / NRRL B-3711).